The primary structure comprises 107 residues: MSTATRPSSSATTSVILENPVSQSQPTERLVLRLNRKKKKVSWKDGTVDNEFMQKKSSKKCCIFHKQKPFDEDDSEEEDDNNHHCDHNHEHSESGEASSSNDSKAVD.

Low complexity predominate over residues methionine 1–serine 14. Disordered regions lie at residues methionine 1 to lysine 40 and proline 69 to aspartate 107. Positions aspartate 71–aspartate 80 are enriched in acidic residues. Basic and acidic residues predominate over residues asparagine 81–serine 94. The segment covering glycine 95–aspartate 107 has biased composition (low complexity).

As to quaternary structure, interacts with protein phosphatase 1. In terms of tissue distribution, expressed in roots, cotyledons, leaves, flowers and embryos.

In terms of biological role, inhibitor of protein-phosphatase 1 (PP1). Binds to and inhibits PP1 activity. Required for early embryogenesis progression. The chain is Protein phosphatase 1 regulatory subunit INH3 from Arabidopsis thaliana (Mouse-ear cress).